Here is a 545-residue protein sequence, read N- to C-terminus: Eukaryotic translation initiation factor 3 subunit D-2 (545 aa).

The span at 99–113 shows a compositional bias: basic residues; it reads FRGNIRNNPRTRGRT. The segment at 99 to 158 is disordered; the sequence is FRGNIRNNPRTRGRTGRGGAVTGIGGNQPGVGVNERTKYGKGRDNRRQMGRRFGRNAPTR. The span at 114 to 127 shows a compositional bias: gly residues; the sequence is GRGGAVTGIGGNQP. Over residues 133–145 the composition is skewed to basic and acidic residues; the sequence is ERTKYGKGRDNRR. Positions 287–301 are RNA gate; that stretch reads QFDLLTVNETALEPP.

It belongs to the eIF-3 subunit D family. In terms of assembly, component of the eukaryotic translation initiation factor 3 (eIF-3) complex. The eIF-3 complex interacts with pix.

It is found in the cytoplasm. Its function is as follows. mRNA cap-binding component of the eukaryotic translation initiation factor 3 (eIF-3) complex, which is involved in protein synthesis of a specialized repertoire of mRNAs and, together with other initiation factors, stimulates binding of mRNA and methionyl-tRNAi to the 40S ribosome. The eIF-3 complex specifically targets and initiates translation of a subset of mRNAs involved in cell proliferation. In the eIF-3 complex, eif3d specifically recognizes and binds the 7-methylguanosine cap of a subset of mRNAs. The sequence is that of Eukaryotic translation initiation factor 3 subunit D-2 from Drosophila persimilis (Fruit fly).